Reading from the N-terminus, the 389-residue chain is Major outer membrane porin (389 aa).

The first 22 residues, 1 to 22 (MKKLLKSALLFAATGSALSLQA), serve as a signal peptide directing secretion.

The protein belongs to the chlamydial porin (CP) (TC 1.B.2) family. In terms of assembly, part of a disulfide cross-linked outer membrane complex (COMC) composed of the major outer membrane porin (MOMP), the small cysteine-rich protein (OmcA) and the large cysteine-rich periplasmic protein (OmcB).

It is found in the cell outer membrane. Functionally, in elementary bodies (EBs, the infectious stage, which is able to survive outside the host cell) provides the structural integrity of the outer envelope through disulfide cross-links with the small cysteine-rich protein and the large cysteine-rich periplasmic protein. It has been described in publications as the Sarkosyl-insoluble COMC (Chlamydia outer membrane complex), and serves as the functional equivalent of peptidoglycan. Its function is as follows. Permits diffusion of specific solutes through the outer membrane. This Chlamydia abortus (strain DSM 27085 / S26/3) (Chlamydophila abortus) protein is Major outer membrane porin (ompA).